The chain runs to 83 residues: Exodeoxyribonuclease 7 small subunit (83 aa).

Positions 63–83 (VQNDDGTTGTEPLADTGESGR) are disordered.

The protein belongs to the XseB family. As to quaternary structure, heterooligomer composed of large and small subunits.

The protein resides in the cytoplasm. The enzyme catalyses Exonucleolytic cleavage in either 5'- to 3'- or 3'- to 5'-direction to yield nucleoside 5'-phosphates.. Functionally, bidirectionally degrades single-stranded DNA into large acid-insoluble oligonucleotides, which are then degraded further into small acid-soluble oligonucleotides. The sequence is that of Exodeoxyribonuclease 7 small subunit from Gluconobacter oxydans (strain 621H) (Gluconobacter suboxydans).